The primary structure comprises 846 residues: MPSRNSNVLQRPTYAQLASTSVKSSKGLVSYQDWVVDVKASISAISVNKSRTKVGVAGRELLKVLAVNPNSSKPPVCISDLLQKSTQTKHISCNDVKWGSSFASNLIFTCSPLGNLNVWDVNLEALLYDFNEHSRAVHKLDISSFHPSYVLTASQDGLIKLWDYKESSSTITFRGNSEAARDVVFSPSEPNEFVAAYDSGILQKWDIRFPKLPFLKLAAHNGVVLCVNYSPNGVFLASCGRDKTIRIWDSTSNKKKSLITINNVSPLNCVRWRPANQQSRGSNQLASSSLVGDTAINVWDITRPYIPYRTVSCHDSIVSTMHWASTELLWSCSKDGIFSQTRVENAFNCIDMLPRATSSWSTKNSLVFSSNPISNQRLSSLNRVASFESNISSLKSALYASQNSDGSTSNPVPFVPHNFVGIPQELGILAYRSEDVAQFCYLAKNYRISGDISSACKENAFFARNVGAEFAYQIWDALYFSLGVLNNSDKGISELINIPFVSANNSMADDEKGRNLKNLTQISTSSTPAHDNLSLNDFFEPREASTPSESSNSSIESEDNLDKAVLNKQSQWHDLENPIVLKKGQAPVNNFSTDSRASINSSYLLDSAASNYSGTSHNEMFNSFHRSSVTSASIKSREAVLSAGNSSRRASIFLDQLSLHGDTDSEIPIDDLPPIELPYVVTSIISDCISRGDVQTAACVCSVFSYLTIDLPRIQLDDLLESYVDLLRRFGMFSEATLLINMSGSKNLKYIHSSSRDLIFEMENKKATGNEQSEKGKENAKTVTSLKKCVYCELPLRGVLVYPPVCGHIGHESCLRSWYFDNTDDALPVCPVPGCGVKLLDKRALI.

WD repeat units lie at residues 88–129 (TKHI…LLYD), 132–172 (EHSR…STIT), 175–215 (GNSE…LPFL), 219–258 (AHNG…KKSL), 262–309 (NNVS…IPYR), and 313–348 (CHDS…NAFN). A disordered region spans residues 541–560 (PREASTPSESSNSSIESEDN). Over residues 544–555 (ASTPSESSNSSI) the composition is skewed to low complexity. The WD 7 repeat unit spans residues 624–663 (FHRSSVTSASIKSREAVLSAGNSSRRASIFLDQLSLHGDT).

This is an uncharacterized protein from Schizosaccharomyces pombe (strain 972 / ATCC 24843) (Fission yeast).